Consider the following 235-residue polypeptide: MRAGHALVLFSGGQDSTTCLAWALERFERVETIGFDYGQRHHVELEARTAVLAALRGRFPAWSARLGDDHMVDLAVLGQISDTALTRDTAIQMTEAGLPNTFVPGRNLLFFQLAAAVGYRRGLHTLVGGMCETDFSGYPDCRDDTLKALQVALSLGMGQRFTIETPLMWIDKAETWEMARQLGGDELVQLIVEDTHTCYHGVRGALHAWGHGCGECPACALRRAGHERWTAQHTA.

10–20 contributes to the ATP binding site; it reads FSGGQDSTTCL. C198, C213, C216, and C219 together coordinate Zn(2+).

The protein belongs to the QueC family. Zn(2+) serves as cofactor.

The catalysed reaction is 7-carboxy-7-deazaguanine + NH4(+) + ATP = 7-cyano-7-deazaguanine + ADP + phosphate + H2O + H(+). It functions in the pathway purine metabolism; 7-cyano-7-deazaguanine biosynthesis. Its function is as follows. Catalyzes the ATP-dependent conversion of 7-carboxy-7-deazaguanine (CDG) to 7-cyano-7-deazaguanine (preQ(0)). In Paracidovorax citrulli (strain AAC00-1) (Acidovorax citrulli), this protein is 7-cyano-7-deazaguanine synthase.